A 66-amino-acid polypeptide reads, in one-letter code: Large ribosomal subunit protein uL29 (66 aa).

Belongs to the universal ribosomal protein uL29 family.

In Bartonella henselae (strain ATCC 49882 / DSM 28221 / CCUG 30454 / Houston 1) (Rochalimaea henselae), this protein is Large ribosomal subunit protein uL29.